Consider the following 183-residue polypeptide: UPF0398 protein PEPE_0933 (183 aa).

It belongs to the UPF0398 family.

The protein is UPF0398 protein PEPE_0933 of Pediococcus pentosaceus (strain ATCC 25745 / CCUG 21536 / LMG 10740 / 183-1w).